Here is a 152-residue protein sequence, read N- to C-terminus: Calmodulin (152 aa).

Residue A2 is modified to N-acetylalanine. 4 EF-hand domains span residues 10–45 (EQIAEFKEAFSLFDKDGDGSITTKELGTVMRSLGQN), 46–81 (PTEAELQDMINEVDADGNGNIDFPEFLTMMARKMQD), 83–118 (DTEEEIREAFKVFDKDGNGYISAAELRHVMTSLGEK), and 119–152 (LTNEEVDEMIREADLDGDGQVNYDEFVKMMIVRN). The Ca(2+) site is built by D23, D25, D27, S29, E34, D59, D61, N63, N65, E70, D96, D98, N100, Y102, E107, D132, D134, D136, Q138, and E143.

This sequence belongs to the calmodulin family. As to quaternary structure, interacts with cmbB, numA/nucleomorphin, pgkA/phosphoglycerate kinase, and thyB/thymidine kinase in the presence of Ca(2+). Interacts with dwwA in the absence of Ca(2+). The N-terminus is blocked. In terms of processing, trimethylation of Lys-118 observed in other calmodulins is absent here.

It localises to the contractile vacuole. Its function is as follows. Calmodulin mediates the control of a large number of enzymes, ion channels and other proteins by Ca(2+). Among the enzymes to be stimulated by the calmodulin-Ca(2+) complex are a number of protein kinases and phosphatases. This is Calmodulin (calA) from Dictyostelium discoideum (Social amoeba).